The chain runs to 263 residues: Endonuclease 8 (263 aa).

The active-site Schiff-base intermediate with DNA is the proline 2. Glutamate 3 serves as the catalytic Proton donor. Lysine 53 functions as the Proton donor; for beta-elimination activity in the catalytic mechanism. DNA contacts are provided by glutamine 70, arginine 125, and asparagine 169. Residues 229–263 (KVFHRDGELCERCGGIIEKTTLSSRPFYWCPGCQH) form an FPG-type zinc finger. Residue arginine 253 is the Proton donor; for delta-elimination activity of the active site.

Belongs to the FPG family. Requires Zn(2+) as cofactor.

It catalyses the reaction 2'-deoxyribonucleotide-(2'-deoxyribose 5'-phosphate)-2'-deoxyribonucleotide-DNA = a 3'-end 2'-deoxyribonucleotide-(2,3-dehydro-2,3-deoxyribose 5'-phosphate)-DNA + a 5'-end 5'-phospho-2'-deoxyribonucleoside-DNA + H(+). In terms of biological role, involved in base excision repair of DNA damaged by oxidation or by mutagenic agents. Acts as a DNA glycosylase that recognizes and removes damaged bases. Has a preference for oxidized pyrimidines, such as thymine glycol, 5,6-dihydrouracil and 5,6-dihydrothymine. Has AP (apurinic/apyrimidinic) lyase activity and introduces nicks in the DNA strand. Cleaves the DNA backbone by beta-delta elimination to generate a single-strand break at the site of the removed base with both 3'- and 5'-phosphates. In Shigella dysenteriae serotype 1 (strain Sd197), this protein is Endonuclease 8.